The primary structure comprises 395 residues: D-alanine--D-alanine ligase (395 aa).

The 220-residue stretch at 172–391 (KVVLGAAGIP…YTELITRLIE (220 aa)) folds into the ATP-grasp domain. Residue 204–266 (DAGLTYPLFI…EQGIDGREIE (63 aa)) participates in ATP binding. Asp345, Glu358, and Asn360 together coordinate Mg(2+).

This sequence belongs to the D-alanine--D-alanine ligase family. It depends on Mg(2+) as a cofactor. The cofactor is Mn(2+).

It is found in the cytoplasm. The catalysed reaction is 2 D-alanine + ATP = D-alanyl-D-alanine + ADP + phosphate + H(+). Its pathway is cell wall biogenesis; peptidoglycan biosynthesis. Its function is as follows. Cell wall formation. The polypeptide is D-alanine--D-alanine ligase (Bifidobacterium longum subsp. infantis (strain ATCC 15697 / DSM 20088 / JCM 1222 / NCTC 11817 / S12)).